Here is a 206-residue protein sequence, read N- to C-terminus: Large ribosomal subunit protein uL4 (206 aa).

The protein belongs to the universal ribosomal protein uL4 family. Part of the 50S ribosomal subunit.

In terms of biological role, one of the primary rRNA binding proteins, this protein initially binds near the 5'-end of the 23S rRNA. It is important during the early stages of 50S assembly. It makes multiple contacts with different domains of the 23S rRNA in the assembled 50S subunit and ribosome. Its function is as follows. Forms part of the polypeptide exit tunnel. This chain is Large ribosomal subunit protein uL4, found in Paracoccus denitrificans (strain Pd 1222).